The primary structure comprises 783 residues: Cation/H(+) antiporter 10 (783 aa).

A run of 12 helical transmembrane segments spans residues 31–51, 61–81, 100–120, 135–155, 175–195, 206–226, 244–264, 276–295, 300–322, 356–376, 389–409, and 418–438; these read VVFG…FFCI, IGIS…PQLF, IAAL…LMTV, VVIG…QNFF, AIVI…LLEL, ALSA…VASI, AVII…QWVI, MYIH…FVFF, ILGP…ALEA, IFFN…ACLA, LAVS…YEAV, and ATYS…PTVL.

The protein belongs to the monovalent cation:proton antiporter 2 (CPA2) transporter (TC 2.A.37) family. CHX (TC 2.A.37.4) subfamily. As to expression, specifically expressed in pollen.

It localises to the membrane. Its function is as follows. May operate as a cation/H(+) antiporter. The sequence is that of Cation/H(+) antiporter 10 (CHX10) from Arabidopsis thaliana (Mouse-ear cress).